Here is a 132-residue protein sequence, read N- to C-terminus: Ribosome-binding factor A (132 aa).

Belongs to the RbfA family. In terms of assembly, monomer. Binds 30S ribosomal subunits, but not 50S ribosomal subunits or 70S ribosomes.

The protein resides in the cytoplasm. Its function is as follows. One of several proteins that assist in the late maturation steps of the functional core of the 30S ribosomal subunit. Associates with free 30S ribosomal subunits (but not with 30S subunits that are part of 70S ribosomes or polysomes). Required for efficient processing of 16S rRNA. May interact with the 5'-terminal helix region of 16S rRNA. The protein is Ribosome-binding factor A of Bordetella avium (strain 197N).